Here is a 436-residue protein sequence, read N- to C-terminus: F-box/LRR-repeat protein 20 (436 aa).

One can recognise an F-box domain in the interval 22–68; sequence AVINKKLPKELLLRIFSFLDVVTLCRCAQVSRAWNVLALDGSNWQRI. LRR repeat units follow at residues 74-100, 101-126, 127-152, 153-178, 179-204, 205-230, 231-256, 257-282, 283-308, 309-334, 335-363, 364-388, and 389-414; these read QRDI…SLRG, CLGV…NLNG, CTKT…DLAS, CTSI…NISW, CDQV…FLKG, CTQL…NLQT, CLQI…CASG, CSNI…EVAR, CSQL…DLEE, CVQI…SLSH, CELI…ELDN, CPLI…ELYD, and CQQI…AYFA. Thr-417 bears the Phosphothreonine mark. Ser-421 bears the Phosphoserine mark.

Interacts with SKP1 and CUL1.

It localises to the cytoplasm. Functionally, substrate-recognition component of the SCF (SKP1-CUL1-F-box protein)-type E3 ubiquitin ligase complex. Role in neural transmission. The protein is F-box/LRR-repeat protein 20 (FBXL20) of Bos taurus (Bovine).